The following is a 61-amino-acid chain: Small ribosomal subunit protein uS14 (61 aa).

Positions 24, 27, 40, and 43 each coordinate Zn(2+).

This sequence belongs to the universal ribosomal protein uS14 family. Zinc-binding uS14 subfamily. Part of the 30S ribosomal subunit. Contacts proteins S3 and S10. It depends on Zn(2+) as a cofactor.

In terms of biological role, binds 16S rRNA, required for the assembly of 30S particles and may also be responsible for determining the conformation of the 16S rRNA at the A site. This chain is Small ribosomal subunit protein uS14, found in Thermosipho melanesiensis (strain DSM 12029 / CIP 104789 / BI429).